The chain runs to 571 residues: MSGTSWLQFAALIAVLLLTAPALGGYLAKIYGDEAKKPGDRVFGPIERVIYQVCRVDPGSEQRWSTYALSVLAFSVMSFLLLYGIARFQGVLPFNPTDKPAVTDHVAFNAAVSFMTNTNWQSYSGEATMSHFTQMTGLAVQNFVSASAGMCVLAALIRGLARKRASTLGNFWVDLARTVLRIMFPLSFVVAILLVSQGVIQNLHGFIVANTLEGAPQLIPGGPVASQVAIKQLGTNGGGFFNVNSAHPFENYTPIGNFVENWAILIIPFALCFAFGKMVHDRRQGWAVLAIMGIIWIGMSVAAMSFEAKGNPRLDALGVTQQTTVDQSGGNLEGKEVRFGVGASGLWAASTTGTSNGSVNSMHDSYTPLGGMVPLAHMMLGEVSPGGTGVGLNGLLVMAILAVFIAGLMVGRTPEYLGKKIQATEMKLVTLYILAMPIALLSFAAASVLISSALASRNNPGPHGLSEILYAYTSGANNNGSAFAGLTASTWSYDTTIGVAMLIGRFFLIIPVLAIAGSLARKGTTPVTAATFPTHKPLFVGLVIGVVLIVGGLTFFPALALGPIVEQLSTQ.

Helical transmembrane passes span Leu-7–Leu-27, Thr-66–Ala-86, Gly-137–Ile-157, Phe-188–Val-208, Ile-255–Phe-275, Trp-286–Phe-306, Val-390–Val-410, Thr-430–Ile-450, Ile-497–Gly-517, and Leu-538–Ala-558.

This sequence belongs to the KdpA family. As to quaternary structure, the system is composed of three essential subunits: KdpA, KdpB and KdpC.

The protein localises to the cell membrane. Part of the high-affinity ATP-driven potassium transport (or Kdp) system, which catalyzes the hydrolysis of ATP coupled with the electrogenic transport of potassium into the cytoplasm. This subunit binds the extracellular potassium ions and delivers the ions to the membrane domain of KdpB through an intramembrane tunnel. This chain is Potassium-transporting ATPase potassium-binding subunit, found in Mycobacterium bovis (strain ATCC BAA-935 / AF2122/97).